The primary structure comprises 483 residues: Shaker-related potassium channel tsha2 (483 aa).

The Cytoplasmic segment spans residues 1–165 (MTVVSCEIQD…YPESSGPARM (165 aa)). The chain crosses the membrane as a helical span at residues 166 to 186 (IAVVSVSVIVISIVIFCLETL). The Extracellular segment spans residues 187-220 (PQFREDTSANLPLSNHHTTNGTTLHKKPNLFTDP). The helical transmembrane segment at 221-241 (FFMVETLCIVWFSFEFLVRFL) threads the bilayer. Residues 242 to 252 (SCPSKPAFFKN) lie on the Cytoplasmic side of the membrane. The S-palmitoyl cysteine moiety is linked to residue Cys-243. Residues 253–273 (AMNSIDILAIAPYFITLGLEL) form a helical membrane-spanning segment. Topologically, residues 274-324 (AEQQEAGSEQAMSLAILRVIRLVRVFRIFKLSRHSKGLQILGQTLHASISE) are extracellular. A helical; Voltage-sensor membrane pass occupies residues 325–345 (LGLLIFFLLIGVILFSSAVYF). Over 346 to 353 (AEADDPES) the chain is Cytoplasmic. The chain crosses the membrane as a helical span at residues 354-374 (GFSSIPAAFWWAVVSMTTVGY). The short motif at 371–376 (TVGYGD) is the Selectivity filter element. Topologically, residues 375–385 (GDMCPVTIGGK) are extracellular. A helical transmembrane segment spans residues 386–406 (IVGSMCAIAGVLTIALPVPVI). Topologically, residues 407-483 (VSNFNYFYHR…EHYTGKLTDV (77 aa)) are cytoplasmic. A Phosphotyrosine modification is found at Tyr-426. The residue at position 430 (Thr-430) is a Phosphothreonine. Over residues 440 to 452 (EFKSTSDSRQSLT) the composition is skewed to polar residues. The segment at 440–459 (EFKSTSDSRQSLTKSEDTEE) is disordered. Positions 481-483 (TDV) match the PDZ-binding motif.

It belongs to the potassium channel family. A (Shaker) (TC 1.A.1.2) subfamily. Heterotetramer of potassium channel proteins. Binds PDZ domains of dlg1, dlg2 and dlg4. Expressed in oligodendrocytes and astrocytes.

It is found in the membrane. Mediates the voltage-dependent potassium ion permeability of excitable membranes. Assuming opened or closed conformations in response to the voltage difference across the membrane, the protein forms a potassium-selective channel through which potassium ions may pass in accordance with their electrochemical gradient. The protein is Shaker-related potassium channel tsha2 of Oncorhynchus mykiss (Rainbow trout).